A 334-amino-acid polypeptide reads, in one-letter code: Anthranilate phosphoribosyltransferase (334 aa).

5-phospho-alpha-D-ribose 1-diphosphate is bound by residues Gly81, 84 to 85 (GD), Thr89, 91 to 94 (NIST), 109 to 117 (KHGSRSVSS), and Ala121. Gly81 contributes to the anthranilate binding site. Ser93 provides a ligand contact to Mg(2+). Arg167 contacts anthranilate. Positions 225 and 226 each coordinate Mg(2+).

The protein belongs to the anthranilate phosphoribosyltransferase family. Homodimer. Mg(2+) serves as cofactor.

The enzyme catalyses N-(5-phospho-beta-D-ribosyl)anthranilate + diphosphate = 5-phospho-alpha-D-ribose 1-diphosphate + anthranilate. It functions in the pathway amino-acid biosynthesis; L-tryptophan biosynthesis; L-tryptophan from chorismate: step 2/5. Functionally, catalyzes the transfer of the phosphoribosyl group of 5-phosphorylribose-1-pyrophosphate (PRPP) to anthranilate to yield N-(5'-phosphoribosyl)-anthranilate (PRA). In Actinobacillus pleuropneumoniae serotype 5b (strain L20), this protein is Anthranilate phosphoribosyltransferase.